The sequence spans 161 residues: ATP synthase subunit b' (161 aa).

The helical transmembrane segment at 26–45 (LPLMAIQFLLLAFVLDKIFY) threads the bilayer.

This sequence belongs to the ATPase B chain family. In terms of assembly, F-type ATPases have 2 components, F(1) - the catalytic core - and F(0) - the membrane proton channel. F(1) has five subunits: alpha(3), beta(3), gamma(1), delta(1), epsilon(1). F(0) has four main subunits: a(1), b(1), b'(1) and c(10-14). The alpha and beta chains form an alternating ring which encloses part of the gamma chain. F(1) is attached to F(0) by a central stalk formed by the gamma and epsilon chains, while a peripheral stalk is formed by the delta, b and b' chains.

The protein resides in the cellular thylakoid membrane. In terms of biological role, f(1)F(0) ATP synthase produces ATP from ADP in the presence of a proton or sodium gradient. F-type ATPases consist of two structural domains, F(1) containing the extramembraneous catalytic core and F(0) containing the membrane proton channel, linked together by a central stalk and a peripheral stalk. During catalysis, ATP synthesis in the catalytic domain of F(1) is coupled via a rotary mechanism of the central stalk subunits to proton translocation. Its function is as follows. Component of the F(0) channel, it forms part of the peripheral stalk, linking F(1) to F(0). The b'-subunit is a diverged and duplicated form of b found in plants and photosynthetic bacteria. This chain is ATP synthase subunit b', found in Trichodesmium erythraeum (strain IMS101).